Consider the following 289-residue polypeptide: Nucleotide-binding protein Francci3_1634 (289 aa).

13-20 (GLSGAGRS) contributes to the ATP binding site. Residue 64 to 67 (DVRG) coordinates GTP.

It belongs to the RapZ-like family.

In terms of biological role, displays ATPase and GTPase activities. The protein is Nucleotide-binding protein Francci3_1634 of Frankia casuarinae (strain DSM 45818 / CECT 9043 / HFP020203 / CcI3).